Consider the following 415-residue polypeptide: DNA polymerase IV (415 aa).

Residues 15–196 (ILHVDMNCFF…LPVGAMHGIG (182 aa)) form the UmuC domain. Mg(2+) is bound by residues Asp-19 and Asp-115. Glu-116 is an active-site residue. The disordered stretch occupies residues 238 to 260 (KGMDDRQVDPSQMGQHKSVGNSM). A compositionally biased stretch (polar residues) spans 246–260 (DPSQMGQHKSVGNSM).

This sequence belongs to the DNA polymerase type-Y family. Monomer. Requires Mg(2+) as cofactor.

Its subcellular location is the cytoplasm. It catalyses the reaction DNA(n) + a 2'-deoxyribonucleoside 5'-triphosphate = DNA(n+1) + diphosphate. Functionally, poorly processive, error-prone DNA polymerase involved in untargeted mutagenesis. Copies undamaged DNA at stalled replication forks, which arise in vivo from mismatched or misaligned primer ends. These misaligned primers can be extended by PolIV. Exhibits no 3'-5' exonuclease (proofreading) activity. May be involved in translesional synthesis, in conjunction with the beta clamp from PolIII. This Bacillus cereus (strain ZK / E33L) protein is DNA polymerase IV.